The primary structure comprises 1537 residues: DNA (cytosine-5)-methyltransferase 1 (1537 aa).

Residues 1 to 13 (MPARSAPPPPALP) show a composition bias toward pro residues. 2 disordered regions span residues 1 to 34 (MPAR…SEKE) and 97 to 232 (RASN…DEKR). The DMAP1-binding domain occupies 8 to 105 (PPPALPPALR…SRASNGCAGN (98 aa)). A compositionally biased stretch (basic and acidic residues) spans 21–34 (RDLERDEDSLSEKE). A compositionally biased stretch (low complexity) spans 129–154 (SSSSSSSSSSSSSSSSSSSSSLLPAP). The segment covering 171–194 (SPASSRVTRSSGRQPTILSVFSKG) has biased composition (polar residues). An interaction with PCNA region spans residues 182-194 (GRQPTILSVFSKG). Positions 215–227 (KDEEEEEELEEKE) are enriched in acidic residues. Zn(2+)-binding residues include Cys263, Cys266, and His329. Ser420 is subject to Phosphoserine. A CXXC-type zinc finger spans residues 558 to 604 (NAMKRRRCGVCEVCQQPECGKCKACQNMVKFGGSGRSKQACLQRRCP). Zn(2+) contacts are provided by Cys565, Cys568, Cys571, Cys576, Cys579, Cys582, Cys598, and Cys603. Positions 614-638 (DEEVDDNIPEMPSPKKMLQGRKKKQ) are disordered. BAH domains follow at residues 667–791 (ETLE…ETPP) and 883–1011 (HYRK…EDPP). Residues 1006–1050 (SFEDPPNHARSSGNKGKGKGKGKGKGKGKSSTTCEQSEPEPTELK) are disordered. 7 consecutive repeat copies span residues 1020–1021 (KG), 1022–1023 (KG), 1024–1025 (KG), 1026–1027 (KG), 1028–1029 (KG), 1030–1031 (KG), and 1032–1033 (KG). An 8 X 2 AA tandem repeats of K-G region spans residues 1020-1035 (KGKGKGKGKGKGKGKS). The segment covering 1021 to 1033 (GKGKGKGKGKGKG) has biased composition (basic residues). The stretch at 1034-1035 (KS) is one 8; approximate repeat. The region spanning 1054 to 1513 (LRTLDVFSGC…LEIRACVGAR (460 aa)) is the SAM-dependent MTase C5-type domain. S-adenosyl-L-methionine contacts are provided by residues Ser1061, 1065–1066 (GL), 1083–1084 (EM), 1105–1106 (DC), and Cys1106. The active site involves Cys1141. S-adenosyl-L-methionine is bound by residues Asn1492 and Val1494. The tract at residues 1518-1537 (SGAAVAPPAPEKMEMTAAAD) is disordered.

Belongs to the class I-like SAM-binding methyltransferase superfamily. C5-methyltransferase family. In terms of assembly, homodimer. Interacts with PCNA. In terms of tissue distribution, testis and lung.

Its subcellular location is the nucleus. The catalysed reaction is a 2'-deoxycytidine in DNA + S-adenosyl-L-methionine = a 5-methyl-2'-deoxycytidine in DNA + S-adenosyl-L-homocysteine + H(+). Methylates CpG residues. Preferentially methylates hemimethylated DNA. It is responsible for maintaining methylation patterns established in development. Mediates transcriptional repression by direct binding to HDAC2. Plays a role in promoter hypermethylation and transcriptional silencing of tumor suppressor genes (TSGs) or other tumor-related genes. Also required to maintain a transcriptionally repressive state of genes in undifferentiated embryonic stem cells (ESCs). Associates at promoter regions of tumor suppressor genes (TSGs) leading to their gene silencing. In Gallus gallus (Chicken), this protein is DNA (cytosine-5)-methyltransferase 1 (DNMT1).